A 276-amino-acid polypeptide reads, in one-letter code: U6 snRNA phosphodiesterase 1 (276 aa).

A disordered region spans residues 1–58; it reads MIVNYSSSSSEEESGSSSSPSGKRQKLDTETSEALDHGSAQRKVCKSSHLTPRLPLPE. His-131 functions as the Proton acceptor in the catalytic mechanism. Residues 131–133, Tyr-213, and 215–221 contribute to the AMP site; these read HLS and DPSFHIS. UMP contacts are provided by residues Tyr-213 and 217 to 221; that span reads SFHIS. His-219 serves as the catalytic Proton donor.

This sequence belongs to the 2H phosphoesterase superfamily. USB1 family.

The protein resides in the nucleus. The catalysed reaction is a 3'-end uridylyl-uridine-RNA = a 3'-end 2',3'-cyclophospho-uridine-RNA + uridine. The enzyme catalyses a 3'-end uridylyl-adenosine-RNA = a 3'-end 2',3'-cyclophospho-uridine-RNA + adenosine. Its function is as follows. 3'-5' RNA exonuclease that trims the 3' end of oligo(U) and oligo(A) tracts of the pre-U6 small nuclear RNA (snRNA) molecule, leading to the formation of a mature U6 snRNA 3' end-terminated with a 2',3'-cyclic phosphate. Participates in the U6 snRNA 3' end processing that prevents U6 snRNA degradation. In addition also removes uridines from the 3' end of U6atac snRNA and possibly the vault RNA VTRNA1-1. The polypeptide is U6 snRNA phosphodiesterase 1 (Danio rerio (Zebrafish)).